The following is a 93-amino-acid chain: Cell division protein FtsB (93 aa).

The Cytoplasmic segment spans residues 1–3; the sequence is MRI. The chain crosses the membrane as a helical span at residues 4 to 21; it reads FVIALTLLFGWLQYTLWF. Residues 22 to 93 lie on the Periplasmic side of the membrane; that stretch reads GKNGVSDYYT…FYRIVDEEEH (72 aa). Residues 31-75 adopt a coiled-coil conformation; sequence TVEDEIEVQQQVNSKLQARNNEMFAEIDDLRQGLDAIEERARHEL.

The protein belongs to the FtsB family. Part of a complex composed of FtsB, FtsL and FtsQ.

The protein localises to the cell inner membrane. Its function is as follows. Essential cell division protein. May link together the upstream cell division proteins, which are predominantly cytoplasmic, with the downstream cell division proteins, which are predominantly periplasmic. In Vibrio campbellii (strain ATCC BAA-1116), this protein is Cell division protein FtsB.